Reading from the N-terminus, the 273-residue chain is Undecaprenyl-diphosphatase (273 aa).

8 helical membrane-spanning segments follow: residues 3 to 23 (IVEI…EFAP), 48 to 68 (AANT…VVVF), 92 to 112 (MQVI…EDYI), 116 to 136 (LFST…MIAA), 152 to 172 (ITYK…WPGF), 193 to 213 (ADFT…LSLL), 220 to 240 (TIDA…FALI), and 252 to 272 (IRLV…YIVY).

It belongs to the UppP family.

The protein localises to the cell membrane. It carries out the reaction di-trans,octa-cis-undecaprenyl diphosphate + H2O = di-trans,octa-cis-undecaprenyl phosphate + phosphate + H(+). In terms of biological role, catalyzes the dephosphorylation of undecaprenyl diphosphate (UPP). Confers resistance to bacitracin. In Geobacillus sp. (strain WCH70), this protein is Undecaprenyl-diphosphatase.